The following is a 464-amino-acid chain: Protein FAM90A9 (464 aa).

3 disordered regions span residues 1 to 42 (MMAR…DPRL), 70 to 389 (PATL…HDGA), and 411 to 437 (APSF…SEAP). 2 stretches are compositionally biased toward basic and acidic residues: residues 74 to 89 (GKKE…KPRV) and 97 to 114 (NKDK…DPQR). The segment covering 180 to 197 (LASLSPLRKASLSSSSSL) has biased composition (low complexity).

The protein belongs to the FAM90 family.

The protein is Protein FAM90A9 (FAM90A9) of Homo sapiens (Human).